The chain runs to 1531 residues: Slit homolog 1 protein (1531 aa).

A signal peptide spans 1-33 (MALTPQRGSSSGLSRPELWLLLWAAAWRLGATA). Residues 34 to 61 (CPALCTCTGTTVDCHGTGLQAIPKNIPR) enclose the LRRNT domain. LRR repeat units lie at residues 62–83 (NTER…DFAG), 86–107 (QLRV…AFDD), 110–131 (ELER…LFQN), 134–155 (ALSR…AFRG), 158–179 (DLKN…AFRA), and 182–203 (GLEV…SFNH). N72 carries an N-linked (GlcNAc...) asparagine glycan. N192 carries N-linked (GlcNAc...) asparagine glycosylation. The 51-residue stretch at 215–265 (NHLFCDCHLAWLSQWLRQRPTIGLFTQCSGPASLRGLNVAEVQKSEFSCSG) folds into the LRRCT 1 domain. Positions 273–309 (PACTLSSGSCPAMCSCSNGIVDCRGKGLTAIPANLPE) constitute an LRRNT 2 domain. Cysteines 286 and 295 form a disulfide. LRR repeat units lie at residues 310–331 (TMTE…AFSP), 334–355 (KLRR…AFQG), 358–379 (SLNS…VFGG), 382–403 (TLQL…AFQD), and 406–427 (NLSL…TFTS). A glycan (N-linked (GlcNAc...) asparagine) is linked at N406. One can recognise an LRRCT 2 domain in the interval 439–489 (NPFICDCNLKWLADFLRTNPIETTGARCASPRRLANKRIGQIKSKKFRCSA). Cystine bridges form between C443/C466, C445/C487, C513/C519, and C517/C526. Residues 504–540 (NSECTSDVACPHKCRCEASVVECSGLKLSKIPERIPQ) enclose the LRRNT 3 domain. LRR repeat units lie at residues 541 to 562 (STTE…GLFK), 566 to 587 (HLKK…TFEG), 590 to 611 (SVSE…MFRG), 614 to 635 (GLRT…SFTG), and 638 to 659 (NVRL…AFDT). An N-linked (GlcNAc...) asparagine glycan is attached at N571. The N-linked (GlcNAc...) asparagine glycan is linked to N630. The region spanning 671–721 (NPFNCNCQLAWLGDWLRKRKIVTGNPRCQNPDFLRQIPLQDVAFPDFRCEE) is the LRRCT 3 domain. 2 disulfides stabilise this stretch: C675-C698 and C677-C719. The 37-residue stretch at 725-761 (EVGCLPRPQCPQECACLDTVVRCSNKHLQALPKGIPK) folds into the LRRNT 4 domain. N-linked (GlcNAc...) asparagine glycans are attached at residues N762, N801, and N806. LRR repeat units lie at residues 762-783 (NVTE…LSTF), 785-806 (YLQL…SFTN), 809-830 (QLTT…AFQG), and 833-854 (SLRL…IFAD). In terms of domain architecture, LRRCT 4 spans 866–916 (NPLYCDCHLRWLSSWVKTGYKEPGIARCAGPPEMEGKLLLTTPAKKFECQG). EGF-like domains lie at 927–962 (DPCL…RNCE), 964–1003 (SLDS…LTCG), 1005–1041 (NTDD…RACE), 1043–1081 (LVDF…DNCS), 1083–1119 (NQDD…QLCE), and 1124–1160 (PRNS…PECE). 18 disulfide bridges follow: C929-C940, C934-C950, C952-C961, C968-C979, C973-C991, C993-C1002, C1009-C1020, C1014-C1029, C1031-C1040, C1047-C1060, C1054-C1069, C1071-C1080, C1087-C1098, C1092-C1107, C1109-C1118, C1128-C1139, C1133-C1148, and C1150-C1159. N1026 is a glycosylation site (N-linked (GlcNAc...) asparagine). N-linked (GlcNAc...) asparagine glycosylation is present at N1079. The Laminin G-like domain occupies 1163-1336 (LSVNFVDRDT…QMKPGVVPGC (174 aa)). 3 N-linked (GlcNAc...) asparagine glycosylation sites follow: N1186, N1256, and N1303. 14 cysteine pairs are disulfide-bonded: C1310/C1336, C1339/C1349, C1344/C1359, C1361/C1370, C1378/C1388, C1383/C1398, C1400/C1409, C1419/C1429, C1424/C1439, C1441/C1450, C1456/C1495, C1474/C1509, C1485/C1525, and C1489/C1527. 3 EGF-like domains span residues 1337-1371 (EPCR…LHCD), 1374-1410 (VDGP…ALCN), and 1415-1451 (VAEP…ELCE). Residues 1456 to 1531 (CRGDPVRDFH…PTKCGCAPCA (76 aa)) enclose the CTCK domain.

As to quaternary structure, interacts with ROBO1 and GREM1. In adult brains expressed in the hippocampus, cerebral cortex, and olfactory bulb but not in the cerebellum. In embryo expressed in cerebral cortex.

The protein localises to the secreted. Its function is as follows. Thought to act as molecular guidance cue in cellular migration, and function appears to be mediated by interaction with roundabout homolog receptors. During neural development involved in axonal navigation at the ventral midline of the neural tube and projection of axons to different regions. SLIT1 and SLIT2 together seem to be essential for midline guidance in the forebrain by acting as repulsive signal preventing inappropriate midline crossing by axons projecting from the olfactory bulb. The polypeptide is Slit homolog 1 protein (Slit1) (Rattus norvegicus (Rat)).